Here is a 413-residue protein sequence, read N- to C-terminus: Serine hydroxymethyltransferase (413 aa).

(6S)-5,6,7,8-tetrahydrofolate-binding positions include L117 and 121–123; that span reads GHL. K226 is modified (N6-(pyridoxal phosphate)lysine). 349 to 351 provides a ligand contact to (6S)-5,6,7,8-tetrahydrofolate; sequence SPF.

Belongs to the SHMT family. As to quaternary structure, homodimer. Pyridoxal 5'-phosphate is required as a cofactor.

It is found in the cytoplasm. It catalyses the reaction (6R)-5,10-methylene-5,6,7,8-tetrahydrofolate + glycine + H2O = (6S)-5,6,7,8-tetrahydrofolate + L-serine. Its pathway is one-carbon metabolism; tetrahydrofolate interconversion. The protein operates within amino-acid biosynthesis; glycine biosynthesis; glycine from L-serine: step 1/1. Catalyzes the reversible interconversion of serine and glycine with tetrahydrofolate (THF) serving as the one-carbon carrier. This reaction serves as the major source of one-carbon groups required for the biosynthesis of purines, thymidylate, methionine, and other important biomolecules. Also exhibits THF-independent aldolase activity toward beta-hydroxyamino acids, producing glycine and aldehydes, via a retro-aldol mechanism. The protein is Serine hydroxymethyltransferase of Listeria innocua serovar 6a (strain ATCC BAA-680 / CLIP 11262).